A 380-amino-acid polypeptide reads, in one-letter code: Glucose-1-phosphate adenylyltransferase (380 aa).

Alpha-D-glucose 1-phosphate is bound by residues Gly-164, 179–180 (EK), and Ser-190.

The protein belongs to the bacterial/plant glucose-1-phosphate adenylyltransferase family. As to quaternary structure, homotetramer.

The catalysed reaction is alpha-D-glucose 1-phosphate + ATP + H(+) = ADP-alpha-D-glucose + diphosphate. It functions in the pathway glycan biosynthesis; glycogen biosynthesis. In terms of biological role, involved in the biosynthesis of ADP-glucose, a building block required for the elongation reactions to produce glycogen. Catalyzes the reaction between ATP and alpha-D-glucose 1-phosphate (G1P) to produce pyrophosphate and ADP-Glc. The chain is Glucose-1-phosphate adenylyltransferase from Lactococcus lactis subsp. lactis (strain IL1403) (Streptococcus lactis).